A 172-amino-acid chain; its full sequence is Translocon-associated protein subunit delta (172 aa).

Positions 1–24 are cleaved as a signal peptide; the sequence is MAALASLGALALLLLSGLSCCSEA. A disulfide bond links Cys-25 and Cys-56. Over 25-143 the chain is Lumenal; sequence CVEPQITPSY…SVDHRGTWNG (119 aa). Lys-72 participates in a covalent cross-link: Glycyl lysine isopeptide (Lys-Gly) (interchain with G-Cter in ubiquitin). Residues 144–164 traverse the membrane as a helical segment; that stretch reads PWVSTEVLAAAIGLVIYYLAF. Over 165-172 the chain is Cytoplasmic; sequence SAKSHIQA.

Belongs to the TRAP-delta family. Heterotetramer of TRAP-alpha, TRAP-beta, TRAP-delta and TRAP-gamma.

Its subcellular location is the endoplasmic reticulum membrane. Its function is as follows. TRAP proteins are part of a complex whose function is to bind calcium to the ER membrane and thereby regulate the retention of ER resident proteins. The protein is Translocon-associated protein subunit delta (SSR4) of Bos taurus (Bovine).